We begin with the raw amino-acid sequence, 476 residues long: Glycogen synthase (476 aa).

Lys15 is an ADP-alpha-D-glucose binding site.

This sequence belongs to the glycosyltransferase 1 family. Bacterial/plant glycogen synthase subfamily.

It carries out the reaction [(1-&gt;4)-alpha-D-glucosyl](n) + ADP-alpha-D-glucose = [(1-&gt;4)-alpha-D-glucosyl](n+1) + ADP + H(+). It functions in the pathway glycan biosynthesis; glycogen biosynthesis. Synthesizes alpha-1,4-glucan chains using ADP-glucose. The chain is Glycogen synthase from Streptococcus agalactiae serotype Ia (strain ATCC 27591 / A909 / CDC SS700).